Consider the following 209-residue polypeptide: Large ribosomal subunit protein uL3 (209 aa).

The interval 141-163 is disordered; the sequence is RAVGSMGASSDPSRTFKNKRMPG.

The protein belongs to the universal ribosomal protein uL3 family. Part of the 50S ribosomal subunit. Forms a cluster with proteins L14 and L19.

In terms of biological role, one of the primary rRNA binding proteins, it binds directly near the 3'-end of the 23S rRNA, where it nucleates assembly of the 50S subunit. The chain is Large ribosomal subunit protein uL3 from Clostridium botulinum (strain ATCC 19397 / Type A).